A 142-amino-acid polypeptide reads, in one-letter code: ATP synthase epsilon chain (142 aa).

The protein belongs to the ATPase epsilon chain family. In terms of assembly, F-type ATPases have 2 components, CF(1) - the catalytic core - and CF(0) - the membrane proton channel. CF(1) has five subunits: alpha(3), beta(3), gamma(1), delta(1), epsilon(1). CF(0) has three main subunits: a, b and c.

It localises to the cell inner membrane. Produces ATP from ADP in the presence of a proton gradient across the membrane. This is ATP synthase epsilon chain from Shewanella loihica (strain ATCC BAA-1088 / PV-4).